The following is a 78-amino-acid chain: Large ribosomal subunit protein bL28 (78 aa).

The interval 1–23 (MSRVCQVTGKKPMVGNNRSHAKN) is disordered.

This sequence belongs to the bacterial ribosomal protein bL28 family.

The sequence is that of Large ribosomal subunit protein bL28 from Shewanella sediminis (strain HAW-EB3).